The primary structure comprises 177 residues: MNSQIRQNFHQECEAAINRQVNMELYASYVYLSMSYYFDRDDVALKNFAKYFLHQSHEEREHAEKLMKMQNQRGGRLFLQDIKKPERDEWANGLEALECSLQLEKNVNQSILELHKLSTDHNDPHLCDFLESHYLDEQVKSMKELGDHITNLRRMGAPSNGLAEYLFDKHTLGEDHE.

The Ferritin-like diiron domain maps to 7 to 156 (QNFHQECEAA…DHITNLRRMG (150 aa)). The Fe cation site is built by Glu24, Glu59, His62, Glu104, and Gln138.

The protein belongs to the ferritin family. Oligomer of 24 subunits. There are two types of subunits: L (light) chain and H (heavy) chain. The functional molecule is roughly spherical and contains a central cavity into which the insoluble mineral iron core is deposited.

The protein localises to the cytoplasm. The catalysed reaction is 4 Fe(2+) + O2 + 4 H(+) = 4 Fe(3+) + 2 H2O. Functionally, stores iron in a soluble, non-toxic, readily available form. Important for iron homeostasis. Has ferroxidase activity. Iron is taken up in the ferrous form and deposited as ferric hydroxides after oxidation. This Xenopus laevis (African clawed frog) protein is Ferritin heavy chain, oocyte isoform.